Reading from the N-terminus, the 88-residue chain is MLTNADREQIIAQYQRGESDTGSPEVQVALLSARINDLQNHFKAHKADHHSRRGLIRMVNTRRKLLDYLKGKDLGRYTTLISQLGLRR.

This sequence belongs to the universal ribosomal protein uS15 family. Part of the 30S ribosomal subunit. Forms a bridge to the 50S subunit in the 70S ribosome, contacting the 23S rRNA.

In terms of biological role, one of the primary rRNA binding proteins, it binds directly to 16S rRNA where it helps nucleate assembly of the platform of the 30S subunit by binding and bridging several RNA helices of the 16S rRNA. Forms an intersubunit bridge (bridge B4) with the 23S rRNA of the 50S subunit in the ribosome. The protein is Small ribosomal subunit protein uS15 of Psychrobacter cryohalolentis (strain ATCC BAA-1226 / DSM 17306 / VKM B-2378 / K5).